A 244-amino-acid chain; its full sequence is L-xylulose reductase (244 aa).

Met1 carries the N-acetylmethionine modification. Residue 11–39 (LVTGAGKGIGRSTVLALKAAGAQVVAVSR) participates in NADP(+) binding. Residue Arg21 is modified to Omega-N-methylarginine. Ser136 is a substrate binding site. Residue Tyr149 is the Proton acceptor of the active site. Residue Lys153 is part of the active site.

It belongs to the short-chain dehydrogenases/reductases (SDR) family. Homotetramer. In terms of tissue distribution, highly expressed in kidney, liver and epididymis. Expressed at intermediate level in lung. Weakly or not expressed in brain, heart, spleen and testis.

It is found in the membrane. The protein resides in the apical cell membrane. It carries out the reaction xylitol + NADP(+) = L-xylulose + NADPH + H(+). Its function is as follows. Catalyzes the NADPH-dependent reduction of several pentoses, tetroses, trioses, alpha-dicarbonyl compounds and L-xylulose. Participates in the uronate cycle of glucose metabolism. May play a role in the water absorption and cellular osmoregulation in the proximal renal tubules by producing xylitol, an osmolyte, thereby preventing osmolytic stress from occurring in the renal tubules. The chain is L-xylulose reductase (Dcxr) from Mus musculus (Mouse).